Consider the following 165-residue polypeptide: Phosphopantetheine adenylyltransferase (165 aa).

Substrate is bound at residue T9. Residues 9–10 (TF) and H17 each bind ATP. 3 residues coordinate substrate: K41, L73, and R87. Residues 88-90 (GLR), E98, and 123-129 (YMFISAT) each bind ATP.

Belongs to the bacterial CoaD family. As to quaternary structure, homohexamer. Requires Mg(2+) as cofactor.

It localises to the cytoplasm. It carries out the reaction (R)-4'-phosphopantetheine + ATP + H(+) = 3'-dephospho-CoA + diphosphate. The protein operates within cofactor biosynthesis; coenzyme A biosynthesis; CoA from (R)-pantothenate: step 4/5. Its function is as follows. Reversibly transfers an adenylyl group from ATP to 4'-phosphopantetheine, yielding dephospho-CoA (dPCoA) and pyrophosphate. The polypeptide is Phosphopantetheine adenylyltransferase (Nitrosospira multiformis (strain ATCC 25196 / NCIMB 11849 / C 71)).